The chain runs to 155 residues: Snaclec agkicetin-C subunit alpha (155 aa).

Positions 1-23 are cleaved as a signal peptide; sequence MGRFIFVSFGLLVVFLSLSGTAA. Cystine bridges form between cysteine 25/cysteine 36, cysteine 53/cysteine 149, and cysteine 124/cysteine 141. Positions 32–150 constitute a C-type lectin domain; the sequence is YIRFCYQPFK…CGLKHVFMCK (119 aa).

The protein belongs to the snaclec family. In terms of assembly, heterodimer of subunits alpha and beta; disulfide-linked. In terms of tissue distribution, expressed by the venom gland.

The protein localises to the secreted. Its function is as follows. Is a potent glycoprotein Ibalpha (GP1BA) antagonist. Concentration-dependently inhibits botrocetin-, ristocetin- and low dose thrombin-induced platelet aggregation. Inhibits platelet adhesion only through inhibiting the vWF interaction with GP1BA, but has minimal effect on other platelet receptors, such as alpha-IIb/beta-3 (ITGA2B/ITGB3) or alpha-2/beta-1 (ITGA2/ITGB1). Causes an instant severe thrombocytopenia in rats and is not lethal to mice. The chain is Snaclec agkicetin-C subunit alpha from Deinagkistrodon acutus (Hundred-pace snake).